A 236-amino-acid polypeptide reads, in one-letter code: Phycocyanobilin:ferredoxin oxidoreductase (236 aa).

The protein belongs to the HY2 family.

It carries out the reaction (2R,3Z)-phycocyanobilin + 4 oxidized [2Fe-2S]-[ferredoxin] = biliverdin IXalpha + 4 reduced [2Fe-2S]-[ferredoxin] + 4 H(+). Catalyzes the four-electron reduction of biliverdin IX-alpha (2-electron reduction at both the A and D rings); the reaction proceeds via an isolatable 2-electron intermediate, 181,182-dihydrobiliverdin. This is Phycocyanobilin:ferredoxin oxidoreductase (pcyA) from Thermosynechococcus vestitus (strain NIES-2133 / IAM M-273 / BP-1).